A 212-amino-acid polypeptide reads, in one-letter code: Riboflavin kinase (212 aa).

The H-T-H motif-like stretch occupies residues 1-87 (MKMKTLFLLI…YEEISTALYS (87 aa)). Positions 88–212 (GFIVGEVISG…DGDKVRIEVV (125 aa)) are riboflavin kinase. Position 97-102 (97-102 (GIGEGA)) interacts with CDP. T124 and N126 together coordinate Mg(2+). Residues T180 and E188 each coordinate FMN. 193-196 (VKLR) serves as a coordination point for CDP.

This sequence belongs to the archaeal riboflavin kinase family. It depends on Mg(2+) as a cofactor.

It carries out the reaction riboflavin + CTP = CDP + FMN + H(+). It participates in cofactor biosynthesis; FMN biosynthesis; FMN from riboflavin (CTP route): step 1/1. Catalyzes the CTP-dependent phosphorylation of riboflavin (vitamin B2) to form flavin mononucleotide (FMN). This is Riboflavin kinase (ribK) from Pyrococcus abyssi (strain GE5 / Orsay).